Consider the following 346-residue polypeptide: Autophagy-related protein 3 (346 aa).

The flexible region stretch occupies residues 85–161 (DFAGDAGHEE…DDDDEAIIRA (77 aa)). C238 (glycyl thioester intermediate) is an active-site residue. Residues 242–322 (SVMKTLLDRA…DQEVAIRVDQ (81 aa)) form a handle region region.

Belongs to the ATG3 family. Monomer. Interacts with apg-6/atg8 through an intermediate thioester bond through the C-terminal Gly of apg-6/atg8. Also interacts with the 40 amino acid C-terminal region of the E1-like apg-5/atg7 enzyme. Also interacts with the atg12-apg-4/atg5 conjugate.

It is found in the cytoplasm. In terms of biological role, E2 conjugating enzyme required for the cytoplasm to vacuole transport (Cvt) and autophagy. Required for selective autophagic degradation of the nucleus (nucleophagy) as well as for mitophagy which contributes to regulate mitochondrial quantity and quality by eliminating the mitochondria to a basal level to fulfill cellular energy requirements and preventing excess ROS production. Responsible for the E2-like covalent binding of phosphatidylethanolamine to the C-terminal Gly of apg-6/atg8. The atg12-apg-4/atg5 conjugate plays a role of an E3 and promotes the transfer of apg-6/atg8 from apg-3/atg3 to phosphatidylethanolamine (PE). This step is required for the membrane association of apg-6/atg8. The formation of the apg-6/atg8-phosphatidylethanolamine conjugate is essential for autophagy and for the cytoplasm to vacuole transport (Cvt). The apg-6/atg8-PE conjugate mediates tethering between adjacent membranes and stimulates membrane hemifusion, leading to expansion of the autophagosomal membrane during autophagy. This Neurospora crassa (strain ATCC 24698 / 74-OR23-1A / CBS 708.71 / DSM 1257 / FGSC 987) protein is Autophagy-related protein 3 (apg-3).